A 440-amino-acid polypeptide reads, in one-letter code: Enolase (440 aa).

Position 163 (Gln-163) interacts with (2R)-2-phosphoglycerate. Catalysis depends on Glu-205, which acts as the Proton donor. 3 residues coordinate Mg(2+): Asp-242, Glu-288, and Asp-315. Lys-340, Arg-369, Ser-370, and Lys-391 together coordinate (2R)-2-phosphoglycerate. The active-site Proton acceptor is Lys-340.

It belongs to the enolase family. It depends on Mg(2+) as a cofactor.

It is found in the cytoplasm. It localises to the secreted. The protein localises to the cell surface. It catalyses the reaction (2R)-2-phosphoglycerate = phosphoenolpyruvate + H2O. It participates in carbohydrate degradation; glycolysis; pyruvate from D-glyceraldehyde 3-phosphate: step 4/5. Catalyzes the reversible conversion of 2-phosphoglycerate (2-PG) into phosphoenolpyruvate (PEP). It is essential for the degradation of carbohydrates via glycolysis. The protein is Enolase of Pediococcus pentosaceus (strain ATCC 25745 / CCUG 21536 / LMG 10740 / 183-1w).